Here is a 337-residue protein sequence, read N- to C-terminus: Anthranilate phosphoribosyltransferase (337 aa).

5-phospho-alpha-D-ribose 1-diphosphate is bound by residues G81, 84–85, S89, 91–94, 109–117, and A121; these read GD, NVST, and KHGNRAASS. G81 is an anthranilate binding site. S93 contributes to the Mg(2+) binding site. Position 112 (N112) interacts with anthranilate. R167 contributes to the anthranilate binding site. Positions 226 and 227 each coordinate Mg(2+).

Belongs to the anthranilate phosphoribosyltransferase family. Homodimer. Mg(2+) serves as cofactor.

It carries out the reaction N-(5-phospho-beta-D-ribosyl)anthranilate + diphosphate = 5-phospho-alpha-D-ribose 1-diphosphate + anthranilate. Its pathway is amino-acid biosynthesis; L-tryptophan biosynthesis; L-tryptophan from chorismate: step 2/5. Functionally, catalyzes the transfer of the phosphoribosyl group of 5-phosphorylribose-1-pyrophosphate (PRPP) to anthranilate to yield N-(5'-phosphoribosyl)-anthranilate (PRA). The chain is Anthranilate phosphoribosyltransferase from Methylobacterium sp. (strain 4-46).